A 151-amino-acid polypeptide reads, in one-letter code: Conidium-specific protein (151 aa).

A disordered region spans residues 1–72; it reads MAKPHCSSRS…FSGDPDSEVE (72 aa). Residues 48 to 60 show a composition bias toward basic and acidic residues; the sequence is RKDNSADKGDTLR.

This Emericella nidulans (strain FGSC A4 / ATCC 38163 / CBS 112.46 / NRRL 194 / M139) (Aspergillus nidulans) protein is Conidium-specific protein (SpoC1-C1D).